The following is a 452-amino-acid chain: Maltoporin (452 aa).

Residues 1-25 form the signal peptide; sequence MMITLRKLPLAVAVAAGVMSAQAMA.

It belongs to the porin LamB (TC 1.B.3) family. As to quaternary structure, homotrimer formed of three 18-stranded antiparallel beta-barrels, containing three independent channels.

It is found in the cell outer membrane. It carries out the reaction beta-maltose(in) = beta-maltose(out). Functionally, involved in the transport of maltose and maltodextrins. The polypeptide is Maltoporin (Salmonella newport (strain SL254)).